Here is a 621-residue protein sequence, read N- to C-terminus: Rab11 family-interacting protein 4A (621 aa).

EF-hand domains follow at residues 14-49 (AFLK…FGQG) and 47-82 (GQGD…IKGC). Aspartate 27, aspartate 29, aspartate 31, tyrosine 33, histidine 38, aspartate 60, asparagine 62, arginine 66, and aspartate 71 together coordinate Ca(2+). Disordered stretches follow at residues 132–172 (YSDE…KEEG) and 203–243 (DYGE…GQTP). The span at 151–161 (AADSGAGSESS) shows a compositional bias: low complexity. Positions 162–172 (EGGRQDDKEEG) are enriched in basic and acidic residues. Positions 225-243 (TNGFSDLGSSLPSSAGQTP) are enriched in polar residues. Positions 348 to 556 (DLKSKLKQEN…LNGQILSLSL (209 aa)) form a coiled coil. Positions 558–620 (EAKNLFACHT…DHNPSILEIK (63 aa)) constitute an FIP-RBD domain.

In terms of assembly, homodimer. Forms a complex with Rab11 (rab11a or rab11b) and arf6. In terms of tissue distribution, isoform 1 is predominantly expressed in neural tissues. Isoform B is expressed ubiquitously. In the developing retina, it is expressed in progenitors throughout the retina at early stages and becomes restricted to the ganglion cell layer and ciliary marginal zone as differentiation proceeds.

Its subcellular location is the recycling endosome membrane. The protein localises to the cleavage furrow. The protein resides in the midbody. It localises to the cytoplasmic vesicle. Its function is as follows. Acts as a regulator of endocytic traffic by participating in membrane delivery. Required for the abscission step in cytokinesis, possibly by acting as an 'address tag' delivering recycling endosome membranes to the cleavage furrow during late cytokinesis. May play a role in differentiation during retinal development. This Danio rerio (Zebrafish) protein is Rab11 family-interacting protein 4A (rab11fip4a).